Reading from the N-terminus, the 489-residue chain is Rhamnulokinase (489 aa).

13 to 17 (ASSGR) serves as a coordination point for ATP. Cys68 and Cys222 are disulfide-bonded. Residues Gly83 and 236–238 (HDT) each bind substrate. Asp237 acts as the Proton acceptor in catalysis. Thr259 lines the ATP pocket. Asn296 provides a ligand contact to substrate. Gln304 provides a ligand contact to ATP. Residues Cys353 and Cys370 are joined by a disulfide bond. Position 402 (Gly402) interacts with ATP. Cysteines 413 and 417 form a disulfide.

Belongs to the rhamnulokinase family. Requires Mg(2+) as cofactor.

It catalyses the reaction L-rhamnulose + ATP = L-rhamnulose 1-phosphate + ADP + H(+). It functions in the pathway carbohydrate degradation; L-rhamnose degradation; glycerone phosphate from L-rhamnose: step 2/3. Its function is as follows. Involved in the catabolism of L-rhamnose (6-deoxy-L-mannose). Catalyzes the transfer of the gamma-phosphate group from ATP to the 1-hydroxyl group of L-rhamnulose to yield L-rhamnulose 1-phosphate. This chain is Rhamnulokinase, found in Shigella flexneri serotype 5b (strain 8401).